The chain runs to 286 residues: ATP synthase gamma chain (286 aa).

The protein belongs to the ATPase gamma chain family. In terms of assembly, F-type ATPases have 2 components, CF(1) - the catalytic core - and CF(0) - the membrane proton channel. CF(1) has five subunits: alpha(3), beta(3), gamma(1), delta(1), epsilon(1). CF(0) has three main subunits: a, b and c.

Its subcellular location is the cell inner membrane. Produces ATP from ADP in the presence of a proton gradient across the membrane. The gamma chain is believed to be important in regulating ATPase activity and the flow of protons through the CF(0) complex. This Alteromonas mediterranea (strain DSM 17117 / CIP 110805 / LMG 28347 / Deep ecotype) protein is ATP synthase gamma chain.